Here is a 161-residue protein sequence, read N- to C-terminus: Phage-like element PBSX protein XkdI (161 aa).

It to B.subtilis YqbI.

The chain is Phage-like element PBSX protein XkdI (xkdI) from Bacillus subtilis (strain 168).